A 115-amino-acid chain; its full sequence is Large ribosomal subunit protein bL20 (115 aa).

Belongs to the bacterial ribosomal protein bL20 family.

Functionally, binds directly to 23S ribosomal RNA and is necessary for the in vitro assembly process of the 50S ribosomal subunit. It is not involved in the protein synthesizing functions of that subunit. This chain is Large ribosomal subunit protein bL20, found in Methylococcus capsulatus (strain ATCC 33009 / NCIMB 11132 / Bath).